Reading from the N-terminus, the 159-residue chain is Small ribosomal subunit protein uS17 (159 aa).

The protein belongs to the universal ribosomal protein uS17 family.

It localises to the cytoplasm. This is Small ribosomal subunit protein uS17 (RPS11) from Zea mays (Maize).